The primary structure comprises 202 residues: Small ribosomal subunit protein uS4c (202 aa).

The interval 20 to 43 (GLTRKTTRRNSRPGQHGDQPRKPS) is disordered. The 63-residue stretch at 90-152 (MRLDNIVFRL…ARSKQLVENY (63 aa)) folds into the S4 RNA-binding domain.

It belongs to the universal ribosomal protein uS4 family. As to quaternary structure, part of the 30S ribosomal subunit. Contacts protein S5. The interaction surface between S4 and S5 is involved in control of translational fidelity.

It is found in the plastid. Its subcellular location is the chloroplast. In terms of biological role, one of the primary rRNA binding proteins, it binds directly to 16S rRNA where it nucleates assembly of the body of the 30S subunit. With S5 and S12 plays an important role in translational accuracy. This Rhodomonas salina (Cryptomonas salina) protein is Small ribosomal subunit protein uS4c (rps4).